The primary structure comprises 1194 residues: Immunoglobulin superfamily member 3 (1194 aa).

The signal sequence occupies residues 1 to 19 (MKCFFPVLSCLAVLGVVSA). 8 consecutive Ig-like C2-type domains span residues 20-138 (QRQV…AKMN), 143-262 (PDSL…WYAM), 276-386 (PTDK…KTVT), 401-539 (PIIV…ISIT), 545-661 (FAVT…WTRL), 676-803 (PVTK…EEVS), 813-945 (PDSR…TALT), and 949-1097 (PDAS…YRLT). The Extracellular portion of the chain corresponds to 20–1124 (QRQVTVQEGP…LQSIICSNDA (1105 aa)). Disulfide bonds link Cys42-Cys120 and Cys167-Cys246. N-linked (GlcNAc...) asparagine glycosylation occurs at Asn43. The EWI motif signature appears at 250–252 (EWI). Cys302 and Cys376 form a disulfide bridge. N-linked (GlcNAc...) asparagine glycosylation occurs at Asn418. 2 disulfide bridges follow: Cys432-Cys511 and Cys566-Cys645. A glycan (N-linked (GlcNAc...) asparagine) is linked at Asn655. Intrachain disulfides connect Cys701–Cys782, Cys838–Cys918, and Cys974–Cys1080. N-linked (GlcNAc...) asparagine glycosylation occurs at Asn842. The disordered stretch occupies residues 997–1033 (AGGKRSSPGLEEQEEEREEEEEEDDDDDDDPTERTAL). Positions 1007–1027 (EEQEEEREEEEEEDDDDDDDP) are enriched in acidic residues. Residue Asn1077 is glycosylated (N-linked (GlcNAc...) asparagine). A helical membrane pass occupies residues 1125-1145 (LFYFVFFYPFPIFGILIITIL). The Cytoplasmic portion of the chain corresponds to 1146–1194 (LVRFKSRNSSKNSDGKNGVPLLWIKEPHLNYSPTCLEPPVLSIHPGAID).

In terms of tissue distribution, expressed in a wide range of tissues with High expression in Placenta, kidney and lung.

Its subcellular location is the membrane. This Homo sapiens (Human) protein is Immunoglobulin superfamily member 3 (IGSF3).